The primary structure comprises 242 residues: Probable ergothioneine transport ATP-binding protein EgtUA (242 aa).

The 235-residue stretch at 2-236 (IEYKNVALRY…PATDFVADLF (235 aa)) folds into the ABC transporter domain. 34 to 41 (GPSGSGKT) is an ATP binding site.

This sequence belongs to the ABC transporter superfamily. In terms of assembly, the complex is probably composed of at least an ATP-binding protein (EgtUA) and a transmembrane protein (EgtUBC).

The protein localises to the cell inner membrane. It catalyses the reaction ergothioneine(out) + ATP + H2O = ergothioneine(in) + ADP + phosphate + H(+). In terms of biological role, part of an ABC transporter complex EgtU required for the uptake of ergothioneine (EGT), a natural low-molecular weight (LMW) thiol antioxidant. Probably responsible for energy coupling to the transport system. This chain is Probable ergothioneine transport ATP-binding protein EgtUA, found in Streptococcus pneumoniae serotype 2 (strain D39 / NCTC 7466).